Consider the following 113-residue polypeptide: Endoribonuclease SymE (113 aa).

One can recognise a SpoVT-AbrB domain in the interval 29–74; it reads GRYPDYSRIPAITLKGQWLEVAGFATGTAVDVKVMEGCIVLTAQPP.

This sequence belongs to the SymE family.

Its subcellular location is the cytoplasm. Functionally, involved in the degradation and recycling of damaged RNA. It is itself a target for degradation by the ATP-dependent protease Lon. The polypeptide is Endoribonuclease SymE (Escherichia coli O7:K1 (strain IAI39 / ExPEC)).